The sequence spans 458 residues: Protein amnionless (458 aa).

The N-terminal stretch at 1 to 19 (MGALGRVLLWLQLCAMTRA) is a signal peptide. At 20–362 (AYKLWVPNTS…ELNQSSSGAG (343 aa)) the chain is on the extracellular side. N27 carries an N-linked (GlcNAc...) asparagine glycan. 6 cysteine pairs are disulfide-bonded: C43–C96, C137–C213, C205–C211, C223–C249, C234–C250, and C239–C253. Residues 67–87 (SDMLLPLDGELVLASGAALSA) are interaction with CUBN. A VWFC domain is found at 203–254 (QACTDASGCVCGNAEMLPWICASLLQPLGGRCPQAACQDPLLPQGQCCDLCG). An N-linked (GlcNAc...) asparagine glycan is attached at N355. Residues 363 to 383 (LAGGVAALVLLALLGTVLLLL) traverse the membrane as a helical segment. Residues 384-458 (HRSGRLRWRR…LFAGEAEAEA (75 aa)) lie on the Cytoplasmic side of the membrane.

Interacts (via extracellular region) with CUBN/cubilin. This gives rise to a huge complex containing one AMN chain and three CUBN chains. Post-translationally, N-glycosylated. A soluble form arises by proteolytic removal of the membrane anchor. In terms of tissue distribution, expressed in polarized epithelial cells which are specialized in resorption or transport, specifically kidney proximal tubules and intestinal epithelium.

It is found in the apical cell membrane. The protein localises to the cell membrane. The protein resides in the endosome membrane. It localises to the membrane. Its subcellular location is the coated pit. In terms of biological role, membrane-bound component of the endocytic receptor formed by AMN and CUBN. Required for normal CUBN glycosylation and trafficking to the cell surface. The complex formed by AMN and CUBN is required for efficient absorption of vitamin B12. Required for normal CUBN-mediated protein transport in the kidney. This chain is Protein amnionless (Amn), found in Mus musculus (Mouse).